The primary structure comprises 88 residues: Small ribosomal subunit protein bS20 (88 aa).

The segment at 1–22 (MANTPSAKKAVNKIAKRTQVNK) is disordered.

Belongs to the bacterial ribosomal protein bS20 family.

Binds directly to 16S ribosomal RNA. This chain is Small ribosomal subunit protein bS20, found in Bartonella bacilliformis (strain ATCC 35685 / KC583 / Herrer 020/F12,63).